The chain runs to 152 residues: UPF0178 protein YPTS_2857 (152 aa).

This sequence belongs to the UPF0178 family.

This is UPF0178 protein YPTS_2857 from Yersinia pseudotuberculosis serotype IB (strain PB1/+).